Reading from the N-terminus, the 356-residue chain is GDP-mannose 4,6 dehydratase (356 aa).

Residues 12 to 17, 69 to 70, 91 to 95, and Tyr-106 each bind NADP(+); these read GITGQD, DL, and LGAQS. Residue Thr-138 is part of the active site. Residues Glu-140 and Tyr-162 each act as nucleophile in the active site. The NADP(+) site is built by Lys-166, His-192, and Arg-197.

The protein belongs to the NAD(P)-dependent epimerase/dehydratase family. GDP-mannose 4,6-dehydratase subfamily. NADP(+) is required as a cofactor.

It catalyses the reaction GDP-alpha-D-mannose = GDP-4-dehydro-alpha-D-rhamnose + H2O. The protein operates within nucleotide-sugar biosynthesis; GDP-L-fucose biosynthesis via de novo pathway; GDP-L-fucose from GDP-alpha-D-mannose: step 1/2. In terms of biological role, participates in the synthesis of GDP-L-fucose, catalyzing the conversion of GDP-D-mannose to GDP-4-dehydro-6-deoxy-D-mannose (GDP-4-dehydro-alpha-D-rhamnose) which is further catalyzed by GDP-L-fucose synthase (ger). GDP-L-fucose is important for the synthesis of fucosylated N-glycans which are expressed on the cell surface. In Dictyostelium discoideum (Social amoeba), this protein is GDP-mannose 4,6 dehydratase (gmd).